Reading from the N-terminus, the 152-residue chain is 3-dehydroquinate dehydratase (152 aa).

Tyr-26 acts as the Proton acceptor in catalysis. Residues Asn-78, His-84, and Asp-91 each coordinate substrate. The Proton donor role is filled by His-104. Substrate is bound by residues 105 to 106 (LS) and Arg-115.

The protein belongs to the type-II 3-dehydroquinase family. As to quaternary structure, homododecamer.

It catalyses the reaction 3-dehydroquinate = 3-dehydroshikimate + H2O. It participates in metabolic intermediate biosynthesis; chorismate biosynthesis; chorismate from D-erythrose 4-phosphate and phosphoenolpyruvate: step 3/7. Catalyzes a trans-dehydration via an enolate intermediate. The protein is 3-dehydroquinate dehydratase of Idiomarina loihiensis (strain ATCC BAA-735 / DSM 15497 / L2-TR).